A 335-amino-acid chain; its full sequence is Chitin synthase export chaperone (335 aa).

7 helical membrane passes run 55 to 75, 92 to 112, 129 to 149, 164 to 184, 193 to 213, 220 to 240, and 259 to 279; these read IIFQ…ILIM, FHFL…DAGV, GAIS…FQFY, TLCA…PSWG, TVGL…VYIL, IFIL…FFFV, and HYID…MMVY.

The protein belongs to the CHS7 family. Interacts with CHS3.

The protein resides in the endoplasmic reticulum membrane. Its function is as follows. Chaperone required for the export of the chitin synthase CHS3 from the endoplasmic reticulum. In Yarrowia lipolytica (strain CLIB 122 / E 150) (Yeast), this protein is Chitin synthase export chaperone (CHS7).